A 357-amino-acid polypeptide reads, in one-letter code: Peptide chain release factor 1 (357 aa).

The residue at position 234 (Gln-234) is an N5-methylglutamine.

The protein belongs to the prokaryotic/mitochondrial release factor family. Post-translationally, methylated by PrmC. Methylation increases the termination efficiency of RF1.

It localises to the cytoplasm. Its function is as follows. Peptide chain release factor 1 directs the termination of translation in response to the peptide chain termination codons UAG and UAA. The polypeptide is Peptide chain release factor 1 (Lactococcus lactis subsp. cremoris (strain SK11)).